The following is a 197-amino-acid chain: Protein Hikeshi (197 aa).

Residues 18-55 (VAEDKFVFDLPDYESINHVVVFMLGTIPFPEGMGGSVY) are required for F-X-F-G repeats-nucleoporins recognition and nuclear import. The flexible linker region involved in nuclear import of HSP70 proteins stretch occupies residues 124–134 (QTPVGNAAVSS).

Belongs to the OPI10 family. Forms an asymmetric homodimer; required for binding and nuclear import of HSP70 proteins. Interacts with ATP-bound HSP70 proteins. Interacts with NUP62 and NUP153 (via F-X-F-G repeats). Interacts with HSPA8.

It is found in the cytoplasm. Its subcellular location is the cytosol. The protein resides in the nucleus. In terms of biological role, acts as a specific nuclear import carrier for HSP70 proteins following heat-shock stress: acts by mediating the nucleoporin-dependent translocation of ATP-bound HSP70 proteins into the nucleus. HSP70 proteins import is required to protect cells from heat shock damages. Does not translocate ADP-bound HSP70 proteins into the nucleus. The polypeptide is Protein Hikeshi (Homo sapiens (Human)).